The sequence spans 474 residues: tRNA-2-methylthio-N(6)-dimethylallyladenosine synthase (474 aa).

The region spanning 3–120 (KKLLIKTWGC…LPEMIKQSQS (118 aa)) is the MTTase N-terminal domain. Cys-12, Cys-49, Cys-83, Cys-157, Cys-161, and Cys-164 together coordinate [4Fe-4S] cluster. One can recognise a Radical SAM core domain in the interval 143 to 375 (RAEGATAFVS…QQTVNTQAMR (233 aa)). The TRAM domain maps to 378–441 (RQMLDTEQRV…ANSLRGELVR (64 aa)).

This sequence belongs to the methylthiotransferase family. MiaB subfamily. As to quaternary structure, monomer. [4Fe-4S] cluster serves as cofactor.

The protein resides in the cytoplasm. It carries out the reaction N(6)-dimethylallyladenosine(37) in tRNA + (sulfur carrier)-SH + AH2 + 2 S-adenosyl-L-methionine = 2-methylsulfanyl-N(6)-dimethylallyladenosine(37) in tRNA + (sulfur carrier)-H + 5'-deoxyadenosine + L-methionine + A + S-adenosyl-L-homocysteine + 2 H(+). Catalyzes the methylthiolation of N6-(dimethylallyl)adenosine (i(6)A), leading to the formation of 2-methylthio-N6-(dimethylallyl)adenosine (ms(2)i(6)A) at position 37 in tRNAs that read codons beginning with uridine. This Vibrio campbellii (strain ATCC BAA-1116) protein is tRNA-2-methylthio-N(6)-dimethylallyladenosine synthase.